The chain runs to 295 residues: Tyrosine recombinase XerD (295 aa).

The 85-residue stretch at 1–85 (MDTIIEEYLK…TIRSFHQFAL (85 aa)) folds into the Core-binding (CB) domain. The Tyr recombinase domain maps to 106-289 (KLPDVLEINE…SKSQIRKMYN (184 aa)). Active-site residues include Arg-146, Lys-170, His-241, Arg-244, and His-267. The active-site O-(3'-phospho-DNA)-tyrosine intermediate is the Tyr-276.

This sequence belongs to the 'phage' integrase family. XerD subfamily. In terms of assembly, forms a cyclic heterotetrameric complex composed of two molecules of XerC and two molecules of XerD.

The protein resides in the cytoplasm. Site-specific tyrosine recombinase, which acts by catalyzing the cutting and rejoining of the recombining DNA molecules. The XerC-XerD complex is essential to convert dimers of the bacterial chromosome into monomers to permit their segregation at cell division. It also contributes to the segregational stability of plasmids. This chain is Tyrosine recombinase XerD, found in Staphylococcus saprophyticus subsp. saprophyticus (strain ATCC 15305 / DSM 20229 / NCIMB 8711 / NCTC 7292 / S-41).